Consider the following 98-residue polypeptide: UPF0473 protein GTNG_2486 (98 aa).

It belongs to the UPF0473 family.

The protein is UPF0473 protein GTNG_2486 of Geobacillus thermodenitrificans (strain NG80-2).